The primary structure comprises 406 residues: Succinyl-diaminopimelate desuccinylase (406 aa).

H95 contacts Zn(2+). D97 is a catalytic residue. Residue D128 coordinates Zn(2+). The active-site Proton acceptor is the E162. E163, E191, and H377 together coordinate Zn(2+).

This sequence belongs to the peptidase M20A family. DapE subfamily. In terms of assembly, homodimer. The cofactor is Zn(2+). It depends on Co(2+) as a cofactor.

It carries out the reaction N-succinyl-(2S,6S)-2,6-diaminopimelate + H2O = (2S,6S)-2,6-diaminopimelate + succinate. Its pathway is amino-acid biosynthesis; L-lysine biosynthesis via DAP pathway; LL-2,6-diaminopimelate from (S)-tetrahydrodipicolinate (succinylase route): step 3/3. Its function is as follows. Catalyzes the hydrolysis of N-succinyl-L,L-diaminopimelic acid (SDAP), forming succinate and LL-2,6-diaminopimelate (DAP), an intermediate involved in the bacterial biosynthesis of lysine and meso-diaminopimelic acid, an essential component of bacterial cell walls. This is Succinyl-diaminopimelate desuccinylase from Polaromonas naphthalenivorans (strain CJ2).